Here is a 453-residue protein sequence, read N- to C-terminus: Alpha-2B adrenergic receptor (453 aa).

The Extracellular segment spans residues 1–17 (MSGPAMVHQEPYSVQAT). A helical transmembrane segment spans residues 18-42 (AAIASAITFLILFTIFGNALVILAV). Topologically, residues 43–54 (LTSRSLRAPQNL) are cytoplasmic. A helical membrane pass occupies residues 55–80 (FLVSLAAADILVATLIIPFSLANELL). At 81-90 (GYWYFWRAWC) the chain is on the extracellular side. A disulfide bridge connects residues Cys90 and Cys169. The chain crosses the membrane as a helical span at residues 91–113 (EVYLALDVLFCTSSIVHLCAISL). Residues 114-135 (DRYWAVSRALEYNSKRTPRRIK) lie on the Cytoplasmic side of the membrane. Residues 136 to 158 (CIILTVWLIAAVISLPPLIYKGD) traverse the membrane as a helical segment. Topologically, residues 159–174 (QRPEPHGLPQCELNQE) are extracellular. Residues 175 to 198 (AWYILASSIGSFFAPCLIMILVYL) traverse the membrane as a helical segment. Residues 199 to 375 (RIYVIAKRSH…LSREKRFTFV (177 aa)) lie on the Cytoplasmic side of the membrane. The disordered stretch occupies residues 214–329 (AKRGSGEGES…ASPASVFNPP (116 aa)). Over residues 303-314 (AEEDEEEVEECE) the composition is skewed to acidic residues. Residues 376 to 399 (LAVVIGVFVVCWFPFFFSYSLGAI) traverse the membrane as a helical segment. Topologically, residues 400–408 (CPQHCKVPH) are extracellular. Residues 409–432 (GLFQFFFWIGYCNSSLNPVIYTIF) form a helical membrane-spanning segment. Topologically, residues 433–453 (NQDFRRAFRRILCRQWTQTGW) are cytoplasmic. Residue Cys445 is the site of S-palmitoyl cysteine attachment.

It belongs to the G-protein coupled receptor 1 family. Adrenergic receptor subfamily. ADRA2B sub-subfamily. Interacts with RAB26. Interacts with PPP1R9B. Interacts with GGA1, GGA2 and GGA3.

The protein resides in the cell membrane. Its function is as follows. Alpha-2 adrenergic receptors mediate the catecholamine-induced inhibition of adenylate cyclase through the action of G proteins. This Mus musculus (Mouse) protein is Alpha-2B adrenergic receptor (Adra2b).